We begin with the raw amino-acid sequence, 309 residues long: Olfactory receptor 5H17 (309 aa).

Over 1–28 the chain is Extracellular; the sequence is MEKKNETLWTEFVLTGLTCLPQWKPLLF. A glycan (N-linked (GlcNAc...) asparagine) is linked at Asn5. A helical transmembrane segment spans residues 29–49; that stretch reads LVFLVIYFMTIVGNLGLITLI. At 50 to 56 the chain is on the cytoplasmic side; the sequence is WNDPHLH. A helical transmembrane segment spans residues 57–77; that stretch reads IPMYLFLSNLAFVDTWLSSTV. Residues 78–93 lie on the Extracellular side of the membrane; sequence TPRMLFNLLDKGKVIS. A helical transmembrane segment spans residues 94–114; the sequence is VAECKTQFFSFAISVTTECFL. Cysteines 97 and 189 form a disulfide. At 115 to 144 the chain is on the cytoplasmic side; the sequence is LAAMAYDRYAAICNPLLYPVIMTNRLCVRL. Residues 145–165 traverse the membrane as a helical segment; the sequence is LALSFIGGFLHAVIHESFLSR. Residues 166–198 are Extracellular-facing; sequence LTFCNSNIIYHFYCDVIPLLKISCTDPSLNYLI. The helical transmembrane segment at 199–219 threads the bilayer; the sequence is IFIFSGSIQVFTIMTVLISYT. The Cytoplasmic segment spans residues 220–239; that stretch reads FVLFTILKKKSDKGIRKAFS. A helical membrane pass occupies residues 240–260; sequence TCGAHLLSVSLYYGPLLFMYV. At 261 to 271 the chain is on the extracellular side; the sequence is HPASSEVDDQD. Residues 272-292 traverse the membrane as a helical segment; it reads MILSLFYTVIIPVLNPIIYSL. Over 293-309 the chain is Cytoplasmic; sequence RNKQVIDSLKKMLKMMV.

Belongs to the G-protein coupled receptor 1 family.

It is found in the cell membrane. Functionally, potential odorant receptor. This is Olfactory receptor 5H17 from Mus musculus (Mouse).